The chain runs to 1003 residues: Serine/threonine-protein kinase spk-1 (1003 aa).

Disordered stretches follow at residues 92 to 112 (NSTNEEEEISSQEINTSTQNE), 169 to 309 (NEND…SATS), and 337 to 408 (RPSI…KRGG). The segment covering 202-211 (SDEEDVESQD) has biased composition (acidic residues). The segment covering 248-265 (SNDDKNEKDVLVDEDTSK) has biased composition (basic and acidic residues). Residues 285 to 300 (TIDSSVSSSTSSSSTG) show a composition bias toward low complexity. The segment covering 346–359 (KKTEVNANEERLDD) has biased composition (basic and acidic residues). In terms of domain architecture, Protein kinase spans 422–904 (YHVIRKLGWG…AKIALKHPFL (483 aa)). Residues 428 to 436 (LGWGHFSTV) and Lys451 each bind ATP. Catalysis depends on Asp555, which acts as the Proton acceptor. The tract at residues 927-1003 (DGLIPEPFDG…DIERFQLDLQ (77 aa)) is disordered. Basic and acidic residues predominate over residues 936–953 (GNEHQEVYRDENDSRSAS). The segment covering 954–964 (ERSANSRSAGG) has biased composition (low complexity). Polar residues predominate over residues 983–992 (VITNNETTDI). Residues 994 to 1003 (DIERFQLDLQ) show a composition bias toward basic and acidic residues.

This sequence belongs to the protein kinase superfamily. Ser/Thr protein kinase family. Interacts with rsp-3. In terms of tissue distribution, predominantly coexpressed with rsp-3 in adult hermaphrodite germlines.

The catalysed reaction is L-seryl-[protein] + ATP = O-phospho-L-seryl-[protein] + ADP + H(+). It catalyses the reaction L-threonyl-[protein] + ATP = O-phospho-L-threonyl-[protein] + ADP + H(+). Its function is as follows. Required for embryogenesis and germline development in both adult hermaphrodites and males. SR-protein kinase (SRPK) that binds directly to and phosphorylates the RS domain of rsp-3/CeSF2 in vitro. The chain is Serine/threonine-protein kinase spk-1 (spk-1) from Caenorhabditis elegans.